The chain runs to 325 residues: GMP reductase (325 aa).

Residue Cys174 is the Thioimidate intermediate of the active site. 203–226 lines the NADP(+) pocket; the sequence is IIADGGIRTHGDIAKSIRFGATMV.

The protein belongs to the IMPDH/GMPR family. GuaC type 2 subfamily.

It catalyses the reaction IMP + NH4(+) + NADP(+) = GMP + NADPH + 2 H(+). In terms of biological role, catalyzes the irreversible NADPH-dependent deamination of GMP to IMP. It functions in the conversion of nucleobase, nucleoside and nucleotide derivatives of G to A nucleotides, and in maintaining the intracellular balance of A and G nucleotides. In Helicobacter pylori (strain G27), this protein is GMP reductase.